A 339-amino-acid chain; its full sequence is Uroporphyrinogen decarboxylase (339 aa).

Substrate contacts are provided by residues 21–25 (RQAGR), Asp-71, Tyr-147, Ser-202, and His-315.

It belongs to the uroporphyrinogen decarboxylase family. In terms of assembly, homodimer.

It localises to the cytoplasm. The catalysed reaction is uroporphyrinogen III + 4 H(+) = coproporphyrinogen III + 4 CO2. It participates in porphyrin-containing compound metabolism; protoporphyrin-IX biosynthesis; coproporphyrinogen-III from 5-aminolevulinate: step 4/4. Catalyzes the decarboxylation of four acetate groups of uroporphyrinogen-III to yield coproporphyrinogen-III. The chain is Uroporphyrinogen decarboxylase from Helicobacter pylori (strain P12).